The sequence spans 292 residues: Probable 2-(5''-triphosphoribosyl)-3'-dephosphocoenzyme-A synthase (292 aa).

The protein belongs to the CitG/MdcB family.

The enzyme catalyses 3'-dephospho-CoA + ATP = 2'-(5''-triphospho-alpha-D-ribosyl)-3'-dephospho-CoA + adenine. Involved in the formation of 2-(5''-phosphoribosyl)-3'-dephosphocoenzyme-A, the prosthetic group of the acyl-carrier protein of the malonate decarboxylase. This chain is Probable 2-(5''-triphosphoribosyl)-3'-dephosphocoenzyme-A synthase, found in Azotobacter vinelandii (strain DJ / ATCC BAA-1303).